The primary structure comprises 286 residues: Pyridoxal kinase PdxY (286 aa).

Residues Ser9 and 44–45 (MQ) each bind substrate. Residues Asp111, Glu147, and Lys180 each coordinate ATP. Position 221 (Asp221) interacts with substrate.

The protein belongs to the pyridoxine kinase family. PdxY subfamily. In terms of assembly, homodimer. The cofactor is Mg(2+).

It catalyses the reaction pyridoxal + ATP = pyridoxal 5'-phosphate + ADP + H(+). It participates in cofactor metabolism; pyridoxal 5'-phosphate salvage; pyridoxal 5'-phosphate from pyridoxal: step 1/1. Pyridoxal kinase involved in the salvage pathway of pyridoxal 5'-phosphate (PLP). Catalyzes the phosphorylation of pyridoxal to PLP. This is Pyridoxal kinase PdxY from Burkholderia orbicola (strain AU 1054).